A 313-amino-acid polypeptide reads, in one-letter code: Protein EMSY-LIKE 2 (313 aa).

The ENT domain occupies 1 to 88 (MEAQIHILEQ…HQSLDVHPSP (88 aa)). Residues 35-58 (MTNLRKELRISDDENRQLLNNVHN) are a coiled coil. Disordered stretches follow at residues 84-106 (VHPSPTFSASRKKQKTFQSYPSI) and 195-229 (LNVGHGGGTTRGNRRTLSHGGRGRGPRTQPRREHL). Residues 206 to 219 (GNRRTLSHGGRGRG) show a composition bias toward basic residues. Positions 267–293 (HELDKAKKLLKEHEQALIAAIARLTDA) form a coiled coil. Ser294 carries the phosphoserine modification. Residues 294-313 (SDYESDGEEPYSHELPMLLG) are disordered.

In terms of assembly, interacts with EDM2 in nucleus.

Its subcellular location is the nucleus. Its function is as follows. Probably involved in the regulation of chromatin states. Contributes to RPP7-mediated and basal immunity, especially against Hyaloperonospora arabidopsidis isolate Hiks1. Regulates negatively EDM2-dependent floral transition. This Arabidopsis thaliana (Mouse-ear cress) protein is Protein EMSY-LIKE 2.